The primary structure comprises 227 residues: Cytochrome c oxidase subunit 2 (227 aa).

Residues 1–14 (MAYPFQLGLQDATS) are Mitochondrial intermembrane-facing. Residues 15 to 45 (PIMEELMNFHDHTLMIVFLISTLVLYIISLM) traverse the membrane as a helical segment. Residues 46 to 59 (LTTKLTHTSTMDAQ) are Mitochondrial matrix-facing. Residues 60 to 87 (EVETVWTILPAVILIMIALPSLRILYMM) form a helical membrane-spanning segment. The Mitochondrial intermembrane portion of the chain corresponds to 88 to 227 (DEINNPVLTV…HFENWSTSMI (140 aa)). Residues H161, C196, E198, C200, H204, and M207 each contribute to the Cu cation site. E198 contributes to the Mg(2+) binding site.

Belongs to the cytochrome c oxidase subunit 2 family. Component of the cytochrome c oxidase (complex IV, CIV), a multisubunit enzyme composed of 14 subunits. The complex is composed of a catalytic core of 3 subunits MT-CO1, MT-CO2 and MT-CO3, encoded in the mitochondrial DNA, and 11 supernumerary subunits COX4I, COX5A, COX5B, COX6A, COX6B, COX6C, COX7A, COX7B, COX7C, COX8 and NDUFA4, which are encoded in the nuclear genome. The complex exists as a monomer or a dimer and forms supercomplexes (SCs) in the inner mitochondrial membrane with NADH-ubiquinone oxidoreductase (complex I, CI) and ubiquinol-cytochrome c oxidoreductase (cytochrome b-c1 complex, complex III, CIII), resulting in different assemblies (supercomplex SCI(1)III(2)IV(1) and megacomplex MCI(2)III(2)IV(2)). Found in a complex with TMEM177, COA6, COX18, COX20, SCO1 and SCO2. Interacts with TMEM177 in a COX20-dependent manner. Interacts with COX20. Interacts with COX16. Cu cation serves as cofactor.

The protein localises to the mitochondrion inner membrane. It carries out the reaction 4 Fe(II)-[cytochrome c] + O2 + 8 H(+)(in) = 4 Fe(III)-[cytochrome c] + 2 H2O + 4 H(+)(out). Component of the cytochrome c oxidase, the last enzyme in the mitochondrial electron transport chain which drives oxidative phosphorylation. The respiratory chain contains 3 multisubunit complexes succinate dehydrogenase (complex II, CII), ubiquinol-cytochrome c oxidoreductase (cytochrome b-c1 complex, complex III, CIII) and cytochrome c oxidase (complex IV, CIV), that cooperate to transfer electrons derived from NADH and succinate to molecular oxygen, creating an electrochemical gradient over the inner membrane that drives transmembrane transport and the ATP synthase. Cytochrome c oxidase is the component of the respiratory chain that catalyzes the reduction of oxygen to water. Electrons originating from reduced cytochrome c in the intermembrane space (IMS) are transferred via the dinuclear copper A center (CU(A)) of subunit 2 and heme A of subunit 1 to the active site in subunit 1, a binuclear center (BNC) formed by heme A3 and copper B (CU(B)). The BNC reduces molecular oxygen to 2 water molecules using 4 electrons from cytochrome c in the IMS and 4 protons from the mitochondrial matrix. This Apodemus semotus (Taiwan field mouse) protein is Cytochrome c oxidase subunit 2 (MT-CO2).